The chain runs to 1419 residues: Myosin-2B (1419 aa).

Residues 4–57 (EVGTRCWYPNSEAGWIGCEVTKNDFQDGTYHIELTSETGLVIPIETKHLESNNA) enclose the Myosin N-terminal SH3-like domain. The region spanning 75–780 (EATHDLTTLS…VLAYLEKIRS (706 aa)) is the Myosin motor domain. 169–176 (GESGAGKT) lines the ATP pocket. Positions 451–531 (FIGVLDIYGF…LGILSLLDEE (81 aa)) are actin-binding. 6 IQ domains span residues 783 to 805 (VTEL…LYLQ), 806 to 830 (AMLS…DFEM), 831 to 854 (KTDA…VFET), 855 to 878 (LKNI…QREF), 879 to 901 (ESRS…RYQT), and 902 to 931 (LKTG…QAES). Residues 909-940 (IQALVRRKQSQEKLKQLKIQAESAASLKNSAA) adopt a coiled-coil conformation. The tract at residues 1061 to 1419 (KDNERTSTSS…VIKELGSLLA (359 aa)) is non alpha-helical, tail domain. The region spanning 1143-1357 (HSILKQTVQD…LNHLSNTARR (215 aa)) is the Dilute domain.

It belongs to the TRAFAC class myosin-kinesin ATPase superfamily. Myosin family. In terms of assembly, homodimer. Interacts with calmodulin (CMD1) and the myosin light chain MLC1 through its IQ repeats.

In terms of biological role, myosin heavy chain that is required for the cell cycle-regulated transport of various organelles and proteins for their segregation. Functions by binding with its tail domain to receptor proteins on organelles and exerting force with its N-terminal motor domain against actin filaments, thereby transporting its cargo along polarized actin cables. The sequence is that of Myosin-2B (MYO2B) from Naumovozyma castellii (Yeast).